The following is a 288-amino-acid chain: Ribosomal protein L11 methyltransferase (288 aa).

Threonine 141, glycine 164, aspartate 186, and asparagine 227 together coordinate S-adenosyl-L-methionine.

This sequence belongs to the methyltransferase superfamily. PrmA family.

Its subcellular location is the cytoplasm. The catalysed reaction is L-lysyl-[protein] + 3 S-adenosyl-L-methionine = N(6),N(6),N(6)-trimethyl-L-lysyl-[protein] + 3 S-adenosyl-L-homocysteine + 3 H(+). Functionally, methylates ribosomal protein L11. This is Ribosomal protein L11 methyltransferase from Myxococcus xanthus (strain DK1622).